The following is a 131-amino-acid chain: Sec-independent protein translocase protein TatB (131 aa).

A helical transmembrane segment spans residues 2-22; sequence LGSLSWEHMLVLVVVGLVVLG. A disordered region spans residues 96-131; it reads AFDRPVNGAAAQPPPAPAPPPEPHRSGQTPFDADAT. Positions 107 to 116 are enriched in pro residues; the sequence is QPPPAPAPPP.

This sequence belongs to the TatB family. As to quaternary structure, the Tat system comprises two distinct complexes: a TatABC complex, containing multiple copies of TatA, TatB and TatC subunits, and a separate TatA complex, containing only TatA subunits. Substrates initially bind to the TatABC complex, which probably triggers association of the separate TatA complex to form the active translocon.

The protein localises to the cell membrane. Its function is as follows. Part of the twin-arginine translocation (Tat) system that transports large folded proteins containing a characteristic twin-arginine motif in their signal peptide across membranes. Together with TatC, TatB is part of a receptor directly interacting with Tat signal peptides. TatB may form an oligomeric binding site that transiently accommodates folded Tat precursor proteins before their translocation. This chain is Sec-independent protein translocase protein TatB, found in Mycolicibacterium paratuberculosis (strain ATCC BAA-968 / K-10) (Mycobacterium paratuberculosis).